Here is a 206-residue protein sequence, read N- to C-terminus: Small ribosomal subunit protein uS5 (206 aa).

Residues 1–23 (MTDTPTKQENQSKTENPPSSNAN) show a composition bias toward polar residues. The segment at 1–52 (MTDTPTKQENQSKTENPPSSNANEQRRGNRNNDRKRNRRGDSKNERDSEWQE) is disordered. Residues 24 to 52 (EQRRGNRNNDRKRNRRGDSKNERDSEWQE) are compositionally biased toward basic and acidic residues. The 64-residue stretch at 50–113 (WQERVVQIRR…SDGKKHLVRV (64 aa)) folds into the S5 DRBM domain.

This sequence belongs to the universal ribosomal protein uS5 family. Part of the 30S ribosomal subunit. Contacts proteins S4 and S8.

In terms of biological role, with S4 and S12 plays an important role in translational accuracy. Functionally, located at the back of the 30S subunit body where it stabilizes the conformation of the head with respect to the body. This is Small ribosomal subunit protein uS5 from Prochlorococcus marinus subsp. pastoris (strain CCMP1986 / NIES-2087 / MED4).